Reading from the N-terminus, the 137-residue chain is Small ribosomal subunit protein uS12 (137 aa).

Disordered stretches follow at residues 1–22 and 35–57; these read MPTI…SKSP and ATNN…TPKK. Over residues 9–18 the composition is skewed to basic residues; it reads RKPRKSKVSK. Aspartate 102 carries the post-translational modification 3-methylthioaspartic acid.

The protein belongs to the universal ribosomal protein uS12 family. In terms of assembly, part of the 30S ribosomal subunit. Contacts proteins S8 and S17. May interact with IF1 in the 30S initiation complex.

With S4 and S5 plays an important role in translational accuracy. In terms of biological role, interacts with and stabilizes bases of the 16S rRNA that are involved in tRNA selection in the A site and with the mRNA backbone. Located at the interface of the 30S and 50S subunits, it traverses the body of the 30S subunit contacting proteins on the other side and probably holding the rRNA structure together. The combined cluster of proteins S8, S12 and S17 appears to hold together the shoulder and platform of the 30S subunit. The protein is Small ribosomal subunit protein uS12 of Leuconostoc mesenteroides subsp. mesenteroides (strain ATCC 8293 / DSM 20343 / BCRC 11652 / CCM 1803 / JCM 6124 / NCDO 523 / NBRC 100496 / NCIMB 8023 / NCTC 12954 / NRRL B-1118 / 37Y).